A 268-amino-acid chain; its full sequence is Phosphatidylglycerol--prolipoprotein diacylglyceryl transferase (268 aa).

3 helical membrane passes run 25-45 (WYGV…TKVF), 57-77 (YLFY…HCFF), and 93-113 (VWHG…AVYF). Arg-142 provides a ligand contact to a 1,2-diacyl-sn-glycero-3-phospho-(1'-sn-glycerol). 4 helical membrane-spanning segments follow: residues 151-171 (IIGI…DLLP), 175-195 (VQLY…LAYW), 204-224 (GLLL…LEFF), and 236-256 (PLSV…LLIF).

This sequence belongs to the Lgt family.

Its subcellular location is the cell inner membrane. It catalyses the reaction L-cysteinyl-[prolipoprotein] + a 1,2-diacyl-sn-glycero-3-phospho-(1'-sn-glycerol) = an S-1,2-diacyl-sn-glyceryl-L-cysteinyl-[prolipoprotein] + sn-glycerol 1-phosphate + H(+). The protein operates within protein modification; lipoprotein biosynthesis (diacylglyceryl transfer). Its function is as follows. Catalyzes the transfer of the diacylglyceryl group from phosphatidylglycerol to the sulfhydryl group of the N-terminal cysteine of a prolipoprotein, the first step in the formation of mature lipoproteins. The chain is Phosphatidylglycerol--prolipoprotein diacylglyceryl transferase from Chloroherpeton thalassium (strain ATCC 35110 / GB-78).